Reading from the N-terminus, the 525-residue chain is Serine/threonine-protein kinase YPK3 (525 aa).

Phosphoserine occurs at positions 90 and 105. T107 is subject to Phosphothreonine. The 297-residue stretch at 128–424 (FKPVRVLGQG…KTGANNKPTK (297 aa)) folds into the Protein kinase domain. Residues 134-142 (LGQGAYGKV) and K157 each bind ATP. Residues 170–193 (ATDSKREDEDKNDGNNNDNDDGLS) are disordered. The segment covering 172–182 (DSKREDEDKND) has biased composition (basic and acidic residues). Catalysis depends on D277, which acts as the Proton acceptor. S321 is modified (phosphoserine; by PKH1 or PKH2). Positions 445-524 (RKIDWKLLES…KASGSYLEKY (80 aa)) constitute an AGC-kinase C-terminal domain. Residue T490 is modified to Phosphothreonine; by TORC1. Residue S513 is modified to Phosphoserine; by TORC1.

Belongs to the protein kinase superfamily. AGC Ser/Thr protein kinase family. S6 kinase subfamily. Post-translationally, phosphorylated by PKA in a TORC1-dependent manner. Phosphorylation at PKA consensus sites RRxS/T decreases upon rapamycin treatment.

Its subcellular location is the cytoplasm. It carries out the reaction L-seryl-[protein] + ATP = O-phospho-L-seryl-[protein] + ADP + H(+). The enzyme catalyses L-threonyl-[protein] + ATP = O-phospho-L-threonyl-[protein] + ADP + H(+). AGC kinase which plays a role in TOR complex 1 (TORC1) signaling pathway which mediates temporal control of cell growth in response to nutrients. Required for phosphorylation of ribosomal protein S6 (RPS6A/RPS6B) at 'Ser-232' and 'Ser-233'. The chain is Serine/threonine-protein kinase YPK3 from Saccharomyces cerevisiae (strain ATCC 204508 / S288c) (Baker's yeast).